The following is a 287-amino-acid chain: Nucleotide-binding protein Sfri_3380 (287 aa).

Residue 8–15 participates in ATP binding; the sequence is GRSGSGKS. Residue 56-59 participates in GTP binding; the sequence is DVRN.

Belongs to the RapZ-like family.

Displays ATPase and GTPase activities. The polypeptide is Nucleotide-binding protein Sfri_3380 (Shewanella frigidimarina (strain NCIMB 400)).